The following is a 276-amino-acid chain: Halorhodopsin (276 aa).

Residues 1 to 21 constitute a propeptide that is removed on maturation; it reads MTAVSTTATTVLQATQSDVLQ. Residues 22-25 lie on the Extracellular side of the membrane; sequence EIQS. A helical membrane pass occupies residues 26–51; it reads NFLLNSSIWVNIALAGVVILLFVAMG. Residues 52–57 are Cytoplasmic-facing; that stretch reads RDLESP. Residues 58–81 form a helical membrane-spanning segment; it reads RAKLIWVATMLVPLVSISSYAGLA. Over 82 to 105 the chain is Extracellular; the sequence is SGLTVGFLQMPPGHALAGQEVLSP. A helical transmembrane segment spans residues 106-127; that stretch reads WGRYLTWTFSTPMILLALGLLA. Residues 128 to 130 lie on the Cytoplasmic side of the membrane; that stretch reads DTD. The helical transmembrane segment at 131–154 threads the bilayer; that stretch reads IASLFTAITMDIGMCVTGLAAALI. Over 155–157 the chain is Extracellular; sequence TSS. The helical transmembrane segment at 158–180 threads the bilayer; sequence HLLRWVFYGISCAFFVAVLYVLL. Topologically, residues 181-192 are cytoplasmic; the sequence is VQWPADAEAAGT. Residues 193 to 216 form a helical membrane-spanning segment; that stretch reads SEIFGTLKILTVVLWLGYPILWAL. Residues 217–225 are Extracellular-facing; the sequence is GSEGVALLS. The helical transmembrane segment at 226–254 threads the bilayer; the sequence is VGVTSWGYSGLDILAKYVFAFLLLRWVAA. At Lys241 the chain carries N6-(retinylidene)lysine. At 255 to 276 the chain is on the cytoplasmic side; sequence NEGTVSGSGMGIGSGGAAPADD.

This sequence belongs to the archaeal/bacterial/fungal opsin family.

It is found in the cell membrane. In terms of biological role, light-driven anion pump. This is Halorhodopsin from Halobacterium halobium (strain shark).